A 397-amino-acid chain; its full sequence is Elongation factor Tu (397 aa).

Residues 10 to 207 enclose the tr-type G domain; sequence KPHVNVGTIG…TLDTYIPEPV (198 aa). Residues 19 to 26 form a G1 region; it reads GHVDHGKT. Residue 19-26 participates in GTP binding; that stretch reads GHVDHGKT. Threonine 26 contacts Mg(2+). The tract at residues 60 to 64 is G2; that stretch reads GITIN. The G3 stretch occupies residues 81–84; it reads DCPG. GTP contacts are provided by residues 81–85 and 136–139; these read DCPGH and NKAD. Residues 136 to 139 form a G4 region; the sequence is NKAD. Positions 174–176 are G5; that stretch reads SAL.

This sequence belongs to the TRAFAC class translation factor GTPase superfamily. Classic translation factor GTPase family. EF-Tu/EF-1A subfamily. In terms of assembly, monomer.

The protein localises to the cytoplasm. The enzyme catalyses GTP + H2O = GDP + phosphate + H(+). Functionally, GTP hydrolase that promotes the GTP-dependent binding of aminoacyl-tRNA to the A-site of ribosomes during protein biosynthesis. This is Elongation factor Tu from Ectopseudomonas mendocina (strain ymp) (Pseudomonas mendocina).